Here is a 236-residue protein sequence, read N- to C-terminus: MPRLPNSEDPPERPDFITNIINGLERYNPEAVGTLEQYLTTQCEERFCDCNANRTLLKLYQLNPDRIKDEVITNILVKAMTLFPSPQFSQALHLLSPSALSQQSELSEAVSKLRALNNQLEGAQYARFWATIESDDLYADLTTDIQGFEEMVRLRIAVLVSQAFREVQLSLMEQWLGLDEAPLKTFITEACGFKIEGDIVQIPKNPDNEAKKAEIREDVNVEMFSRVIRRAWEEVA.

Residues 48–218 (CDCNANRTLL…EAKKAEIRED (171 aa)) enclose the PCI domain.

Belongs to the eIF-3 subunit K family.

Its subcellular location is the cytoplasm. Its function is as follows. Component of the eukaryotic translation initiation factor 3 (eIF-3) complex, which is involved in protein synthesis of a specialized repertoire of mRNAs and, together with other initiation factors, stimulates binding of mRNA and methionyl-tRNAi to the 40S ribosome. The eIF-3 complex specifically targets and initiates translation of a subset of mRNAs involved in cell proliferation. This chain is Eukaryotic translation initiation factor 3 subunit K, found in Pyricularia oryzae (strain Y34) (Rice blast fungus).